The chain runs to 3649 residues: N-(5-amino-5-carboxypentanoyl)-L-cysteinyl-D-valine synthase (3649 aa).

The tract at residues 401 to 861 (SRDRAYVTYT…LAGHLESQGH (461 aa)) is domain 1 (adipate-activating). 3 consecutive Carrier domains span residues 783–860 (APLL…ESQG), 1859–1936 (APVS…QAAA), and 2909–2984 (APRD…LSGL). Ser-820, Ser-1896, and Ser-2944 each carry O-(pantetheine 4'-phosphoryl)serine. The domain 2 (cysteine-activating) stretch occupies residues 1014–1937 (HHIILDGWSL…QAEHIQAAAL (924 aa)). A domain 3 (valine-activating) region spans residues 2079–2985 (HHSCFDGWSW…FVDNVLSGLA (907 aa)). The active-site For thioesterase activity is the Ser-3502.

This sequence belongs to the ATP-dependent AMP-binding enzyme family. Pantetheine 4'-phosphate is required as a cofactor.

It catalyses the reaction L-2-aminoadipate + L-valine + L-cysteine + 3 ATP + H2O = N-[(5S)-5-amino-5-carboxypentanoyl]-L-cysteinyl-D-valine + 3 AMP + 3 diphosphate + 3 H(+). It functions in the pathway antibiotic biosynthesis; penicillin G biosynthesis; penicillin G from L-alpha-aminoadipate and L-cysteine and L-valine: step 1/3. In terms of biological role, each of the constituent amino acids of the tripeptide acv are activated as aminoacyl-adenylates with peptide bonds formed through the participation of amino acid thioester intermediates. The polypeptide is N-(5-amino-5-carboxypentanoyl)-L-cysteinyl-D-valine synthase (pcbAB) (Amycolatopsis lactamdurans (Nocardia lactamdurans)).